The chain runs to 408 residues: Solute carrier family 35 member F1 (408 aa).

Residues 1 to 21 form a disordered region; it reads MIPPEQPQQQLQPPSPAPPNH. Transmembrane regions (helical) follow at residues 60-80, 94-114, 129-147, 158-178, 186-206, 221-241, 247-267, 284-304, 311-331, and 335-355; these read MLIS…IGLT, VFQS…TLAV, WWKY…YLVV, IQLL…FFLL, FIGI…DVLV, LLVL…EYII, VEFL…QLAI, LLYV…PVVI, SVNL…LFLF, and FSGL…LYSS.

This sequence belongs to the SLC35F solute transporter family.

The protein resides in the cytoplasmic vesicle. Its subcellular location is the secretory vesicle. The protein localises to the synaptic vesicle membrane. In terms of biological role, putative solute transporter. In Homo sapiens (Human), this protein is Solute carrier family 35 member F1 (SLC35F1).